The chain runs to 156 residues: Ribonuclease 7 (156 aa).

The first 28 residues, 1–28, serve as a signal peptide directing secretion; it reads MAPARAGFCPLLLLLLLGLWVAEIPVSA. The tract at residues 29-32 is important for antibacterial activity; the sequence is KPKG. The active-site Proton acceptor is the His-43. His-43, Lys-66, Asn-69, and Thr-70 together coordinate dUMP. 4 disulfide bridges follow: Cys-51/Cys-109, Cys-65/Cys-119, Cys-83/Cys-134, and Cys-90/Cys-97. Residue Asn-127 is glycosylated (N-linked (GlcNAc...) asparagine). The segment at 139–140 is important for antibacterial activity; sequence KK. His-151 and Arg-154 together coordinate dUMP. His-151 serves as the catalytic Proton donor.

Expressed in collecting ducts in kidney, and in apical uroepithelium in bladder (at protein level). Expressed in various epithelial tissues including skin, respiratory tract, genito-urinary tract and, at a low level, in the gut. Expressed in liver, kidney, skeletal muscle and heart.

Its subcellular location is the secreted. Functionally, exhibits a potent RNase activity. Has broad-spectrum antimicrobial activity against many pathogenic microorganisms including uropathogenic E.coli (UPEC), and remarkably potent activity (lethal dose of 90% &lt; 30 nM) against a vancomycin resistant Enterococcus faecium. Causes loss of bacterial membrane integrity. Probably contributes to urinary tract sterility. Bactericidal activity is independent of RNase activity. The chain is Ribonuclease 7 (RNASE7) from Homo sapiens (Human).